The following is a 310-amino-acid chain: Tryptophan 2,3-dioxygenase (310 aa).

The interval 1–39 (MQPPGNDAPAGCPFSGARAQGTQAAHEAPHVPGDAGEQA) is disordered. Residues 79 to 83 (FIIQH), Tyr-141, and Arg-145 each bind substrate. A heme-binding site is contributed by His-268. Substrate is bound at residue Thr-282.

It belongs to the tryptophan 2,3-dioxygenase family. In terms of assembly, homotetramer. The cofactor is heme.

It carries out the reaction L-tryptophan + O2 = N-formyl-L-kynurenine. Its pathway is amino-acid degradation; L-tryptophan degradation via kynurenine pathway; L-kynurenine from L-tryptophan: step 1/2. Its function is as follows. Heme-dependent dioxygenase that catalyzes the oxidative cleavage of the L-tryptophan (L-Trp) pyrrole ring and converts L-tryptophan to N-formyl-L-kynurenine. Catalyzes the oxidative cleavage of the indole moiety. This chain is Tryptophan 2,3-dioxygenase, found in Burkholderia multivorans (strain ATCC 17616 / 249).